The chain runs to 85 residues: MAKTKAGGSTRNGRDSKGRRLGAKLGDGQFALAGSIIYRQRGTKIFPGQNVGRGNDDTLFMLVDGYVKYEKRRNRKYASVYQEKK.

The disordered stretch occupies residues 1–22 (MAKTKAGGSTRNGRDSKGRRLG).

This sequence belongs to the bacterial ribosomal protein bL27 family.

This chain is Large ribosomal subunit protein bL27, found in Mycoplasmopsis pulmonis (strain UAB CTIP) (Mycoplasma pulmonis).